Here is a 219-residue protein sequence, read N- to C-terminus: GTP cyclohydrolase 1 (219 aa).

The segment at M1–A37 is disordered. Residues D14 to A37 show a composition bias toward basic and acidic residues. The Zn(2+) site is built by C108, H111, and C179.

This sequence belongs to the GTP cyclohydrolase I family. In terms of assembly, homomer.

The enzyme catalyses GTP + H2O = 7,8-dihydroneopterin 3'-triphosphate + formate + H(+). It participates in cofactor biosynthesis; 7,8-dihydroneopterin triphosphate biosynthesis; 7,8-dihydroneopterin triphosphate from GTP: step 1/1. This Methylobacterium sp. (strain 4-46) protein is GTP cyclohydrolase 1.